A 242-amino-acid polypeptide reads, in one-letter code: Uridylate kinase (242 aa).

Residue 12–15 (KLSG) participates in ATP binding. Residues 20–25 (GQKGYG) form an involved in allosteric activation by GTP region. Glycine 54 provides a ligand contact to UMP. Residues glycine 55 and arginine 59 each contribute to the ATP site. UMP-binding positions include aspartate 74 and 135–142 (TGNPYFST). Glutamine 163, tyrosine 168, and aspartate 171 together coordinate ATP.

This sequence belongs to the UMP kinase family. In terms of assembly, homohexamer.

It is found in the cytoplasm. It carries out the reaction UMP + ATP = UDP + ADP. It participates in pyrimidine metabolism; CTP biosynthesis via de novo pathway; UDP from UMP (UMPK route): step 1/1. Allosterically activated by GTP. Inhibited by UTP. Its function is as follows. Catalyzes the reversible phosphorylation of UMP to UDP. This Desulforamulus reducens (strain ATCC BAA-1160 / DSM 100696 / MI-1) (Desulfotomaculum reducens) protein is Uridylate kinase.